Reading from the N-terminus, the 554-residue chain is CTP synthase (554 aa).

The segment at 1–265 is amidoligase domain; the sequence is MTPLIFVTGG…DEIVVNQLKL (265 aa). Ser13 provides a ligand contact to CTP. Ser13 contacts UTP. Residues 14-19 and Asp71 each bind ATP; that span reads SLGKGI. Positions 71 and 139 each coordinate Mg(2+). CTP is bound by residues 146–148, 186–191, and Lys222; these read DIE and KTKPTQ. UTP contacts are provided by residues 186–191 and Lys222; that span reads KTKPTQ. The Glutamine amidotransferase type-1 domain occupies 292–545; sequence TIAVVGKYVD…IRAARERKAG (254 aa). Gly353 contributes to the L-glutamine binding site. The Nucleophile; for glutamine hydrolysis role is filled by Cys380. L-glutamine-binding positions include 381 to 384, Glu404, and Arg471; that span reads YGMQ. Residues His518 and Glu520 contribute to the active site.

This sequence belongs to the CTP synthase family. Homotetramer.

The catalysed reaction is UTP + L-glutamine + ATP + H2O = CTP + L-glutamate + ADP + phosphate + 2 H(+). The enzyme catalyses L-glutamine + H2O = L-glutamate + NH4(+). It carries out the reaction UTP + NH4(+) + ATP = CTP + ADP + phosphate + 2 H(+). The protein operates within pyrimidine metabolism; CTP biosynthesis via de novo pathway; CTP from UDP: step 2/2. Its activity is regulated as follows. Allosterically activated by GTP, when glutamine is the substrate; GTP has no effect on the reaction when ammonia is the substrate. The allosteric effector GTP functions by stabilizing the protein conformation that binds the tetrahedral intermediate(s) formed during glutamine hydrolysis. Inhibited by the product CTP, via allosteric rather than competitive inhibition. Its function is as follows. Catalyzes the ATP-dependent amination of UTP to CTP with either L-glutamine or ammonia as the source of nitrogen. Regulates intracellular CTP levels through interactions with the four ribonucleotide triphosphates. The polypeptide is CTP synthase (Stenotrophomonas maltophilia (strain R551-3)).